We begin with the raw amino-acid sequence, 659 residues long: Envelope glycoprotein (659 aa).

A signal peptide spans 1 to 35; sequence MLLISNPRHLGHPMSPGNWKRLIILLSCVFGGAEM. The Extracellular portion of the chain corresponds to 36 to 606; that stretch reads NQQHNNPHQP…NRSPWLTTLL (571 aa). Cystine bridges form between Cys141/Cys162 and Cys154/Cys167. The disordered stretch occupies residues 278-301; it reads LSPPASPIPTVQASPPAPSTPSPT. An N-linked (GlcNAc...) asparagine; by host glycan is attached at Asn318. Disulfide bonds link Cys328-Cys331, Cys328-Cys558, and Cys550-Cys557. A CXXC motif is present at residues 328-331; the sequence is CWLC. Asn389, Asn395, Asn407, and Asn427 each carry an N-linked (GlcNAc...) asparagine; by host glycan. The tract at residues 466 to 486 is fusion peptide; that stretch reads VSLTLAVLLGLGVAAGIGTGS. A coiled-coil region spans residues 506-532; sequence AMDTDLRALQDSISKLEDSLTSLSEVV. The tract at residues 533-549 is immunosuppression; that stretch reads LQNRRGLDLLFLKEGGL. The CX6CC signature appears at 550–558; it reads CAALKEECC. A coiled-coil region spans residues 567–587; the sequence is VRDSMRRLKERLDKRQLEHQK. Residues 607-627 traverse the membrane as a helical segment; sequence SALAGPLLLLLLLLTLGPCVI. Residue Cys625 is the site of S-palmitoyl cysteine; by host attachment. Topologically, residues 628–659 are cytoplasmic; sequence NKLVQFINDRVSAVRILVLRHKYQTLDNEDNL. The YXXL motif; contains endocytosis signal motif lies at 650–653; the sequence is YQTL.

As to quaternary structure, the mature envelope protein (Env) consists of a trimer of SU-TM heterodimers attached by a labile interchain disulfide bond. Post-translationally, specific enzymatic cleavages in vivo yield mature proteins. Envelope glycoproteins are synthesized as an inactive precursor that is N-glycosylated and processed likely by host cell furin or by a furin-like protease in the Golgi to yield the mature SU and TM proteins. The cleavage site between SU and TM requires the minimal sequence [KR]-X-[KR]-R. The R-peptide is released from the C-terminus of the cytoplasmic tail of the TM protein upon particle formation as a result of proteolytic cleavage by the viral protease. Cleavage of this peptide is required for TM to become fusogenic. In terms of processing, the CXXC motif is highly conserved across a broad range of retroviral envelope proteins. It is thought to participate in the formation of a labile disulfide bond possibly with the CX6CC motif present in the transmembrane protein. Isomerization of the intersubunit disulfide bond to an SU intrachain disulfide bond is thought to occur upon receptor recognition in order to allow membrane fusion. The transmembrane protein is palmitoylated. Post-translationally, the R-peptide is palmitoylated.

Its subcellular location is the virion membrane. It localises to the host cell membrane. The surface protein (SU) attaches the virus to the host cell by binding to its receptor. This interaction triggers the refolding of the transmembrane protein (TM) and is thought to activate its fusogenic potential by unmasking its fusion peptide. Fusion occurs at the host cell plasma membrane. Its function is as follows. The transmembrane protein (TM) acts as a class I viral fusion protein. Under the current model, the protein has at least 3 conformational states: pre-fusion native state, pre-hairpin intermediate state, and post-fusion hairpin state. During viral and target cell membrane fusion, the coiled coil regions (heptad repeats) assume a trimer-of-hairpins structure, positioning the fusion peptide in close proximity to the C-terminal region of the ectodomain. The formation of this structure appears to drive apposition and subsequent fusion of viral and target cell membranes. Membranes fusion leads to delivery of the nucleocapsid into the cytoplasm. In Phascolarctos cinereus (Koala), this protein is Envelope glycoprotein (env).